We begin with the raw amino-acid sequence, 451 residues long: Bifunctional protein GlmU (451 aa).

Residues 1–229 are pyrophosphorylase; the sequence is MQRNAVILAA…FNEIMGVNDR (229 aa). Residues 8–11, lysine 22, glutamine 72, and 77–78 each bind UDP-N-acetyl-alpha-D-glucosamine; these read LAAG and GT. Aspartate 102 contacts Mg(2+). UDP-N-acetyl-alpha-D-glucosamine contacts are provided by glycine 139, glutamate 154, and asparagine 227. Asparagine 227 serves as a coordination point for Mg(2+). Positions 230–250 are linker; that stretch reads VMLSNAEKALQQRINIEHMRN. The N-acetyltransferase stretch occupies residues 251–451; sequence GVTIIDPTTT…QITKEGYLKK (201 aa). The UDP-N-acetyl-alpha-D-glucosamine site is built by arginine 332 and lysine 350. Residue histidine 362 is the Proton acceptor of the active site. 2 residues coordinate UDP-N-acetyl-alpha-D-glucosamine: tyrosine 365 and asparagine 376. Acetyl-CoA-binding positions include 385–386, alanine 422, and arginine 439; that span reads NY.

This sequence in the N-terminal section; belongs to the N-acetylglucosamine-1-phosphate uridyltransferase family. It in the C-terminal section; belongs to the transferase hexapeptide repeat family. As to quaternary structure, homotrimer. The cofactor is Mg(2+).

It is found in the cytoplasm. The enzyme catalyses alpha-D-glucosamine 1-phosphate + acetyl-CoA = N-acetyl-alpha-D-glucosamine 1-phosphate + CoA + H(+). It catalyses the reaction N-acetyl-alpha-D-glucosamine 1-phosphate + UTP + H(+) = UDP-N-acetyl-alpha-D-glucosamine + diphosphate. Its pathway is nucleotide-sugar biosynthesis; UDP-N-acetyl-alpha-D-glucosamine biosynthesis; N-acetyl-alpha-D-glucosamine 1-phosphate from alpha-D-glucosamine 6-phosphate (route II): step 2/2. It participates in nucleotide-sugar biosynthesis; UDP-N-acetyl-alpha-D-glucosamine biosynthesis; UDP-N-acetyl-alpha-D-glucosamine from N-acetyl-alpha-D-glucosamine 1-phosphate: step 1/1. The protein operates within bacterial outer membrane biogenesis; LPS lipid A biosynthesis. Functionally, catalyzes the last two sequential reactions in the de novo biosynthetic pathway for UDP-N-acetylglucosamine (UDP-GlcNAc). The C-terminal domain catalyzes the transfer of acetyl group from acetyl coenzyme A to glucosamine-1-phosphate (GlcN-1-P) to produce N-acetylglucosamine-1-phosphate (GlcNAc-1-P), which is converted into UDP-GlcNAc by the transfer of uridine 5-monophosphate (from uridine 5-triphosphate), a reaction catalyzed by the N-terminal domain. The chain is Bifunctional protein GlmU from Staphylococcus haemolyticus (strain JCSC1435).